The following is a 374-amino-acid chain: MKKSIFFVPVLVLFFFGSRFSRVASAGDQRALAASFVFGDSLVDAGNNNYLQTLSRANSPPNGIDFKPSRGNPTGRFTNGRTIADIVGEKLGQQSYAVPYLAPNASGEALLNGVNYASGGGGILNATGSVFVNRLGMDIQVDYFTNTRKQFDKLLGQDKARDYIRKRSLFSVVIGSNDFLNNYLVPFVAAQARLTQTPETFVDDMISHLRNQLKRLYDMDARKFVVGNVAPIGCIPYQKSINQLNDKQCVDLANKLAIQYNARLKDLLTVELKDSLKDAHFVYANVYDLFMDLIVNFKDYGFRTASEACCETRGRLAGILPCGPTSSLCTDRSKHVFWDAYHPTEAANLLIADKLLYGDSKFVTPFNLLHLRDL.

The N-terminal stretch at 1-26 is a signal peptide; sequence MKKSIFFVPVLVLFFFGSRFSRVASA. Residue serine 41 is the Nucleophile of the active site. Asparagine 104 and asparagine 125 each carry an N-linked (GlcNAc...) asparagine glycan. Active-site residues include aspartate 339 and histidine 342.

It belongs to the 'GDSL' lipolytic enzyme family.

It localises to the secreted. The polypeptide is GDSL esterase/lipase At3g50400 (Arabidopsis thaliana (Mouse-ear cress)).